We begin with the raw amino-acid sequence, 397 residues long: Homeobox protein knotted-1-like 2 (397 aa).

Disordered stretches follow at residues 43-68 (TFHLQSSGGGGGGGSGDQCNFQSPGT), 172-191 (FEARQRSSGTSRETSKDPEL), and 233-276 (NNNA…PRAE). Residues 49-58 (SGGGGGGGSG) are compositionally biased toward gly residues. The ELK domain maps to 279 to 299 (ELKNHLLRKYSGYLSSLKQEL). The homeobox; TALE-type DNA-binding region spans 300 to 363 (SKKKKKGKLP…NQRKRHWKPS (64 aa)).

Belongs to the TALE/KNOX homeobox family. As to expression, expressed only in the stems.

The protein localises to the nucleus. Probably binds to the DNA sequence 5'-TGAC-3'. The protein is Homeobox protein knotted-1-like 2 of Malus domestica (Apple).